The chain runs to 413 residues: CinA-like protein (413 aa).

The protein belongs to the CinA family.

This is CinA-like protein from Crocosphaera subtropica (strain ATCC 51142 / BH68) (Cyanothece sp. (strain ATCC 51142)).